The primary structure comprises 477 residues: Serine/threonine-protein kinase prp4 (477 aa).

Residues lysine 25–glycine 123 form a disordered region. Over residues isoleucine 38–valine 47 the composition is skewed to basic and acidic residues. Positions glutamate 74–asparagine 86 are enriched in polar residues. Residues serine 87–serine 98 are compositionally biased toward low complexity. At serine 92 the chain carries Phosphoserine. The span at proline 113–glycine 123 shows a compositional bias: polar residues. The region spanning tyrosine 159–lysine 477 is the Protein kinase domain. Residues leucine 165–valine 173 and lysine 188 each bind ATP. Aspartate 286 acts as the Proton acceptor in catalysis. Tyrosine 320 carries the post-translational modification Phosphotyrosine.

The protein belongs to the protein kinase superfamily. CMGC Ser/Thr protein kinase family.

The catalysed reaction is L-seryl-[protein] + ATP = O-phospho-L-seryl-[protein] + ADP + H(+). It carries out the reaction L-threonyl-[protein] + ATP = O-phospho-L-threonyl-[protein] + ADP + H(+). In terms of biological role, has a role in pre-mRNA splicing and is essential for growth. Phosphorylates srp1. This Schizosaccharomyces pombe (strain 972 / ATCC 24843) (Fission yeast) protein is Serine/threonine-protein kinase prp4 (prp4).